The following is a 184-amino-acid chain: MPIDAWVREEVEIPEGVEVTVENNVVKVKGPKGELERELKYPGVKIFTEDGKVVVYKEFPRKKDIAIARTFKAHINNMIKGVTEGFTYKLKVVYSHFPVTVKVQGDEVIIENFLGEKNPRRAKILPGVTVKVRGQEITVEGIDKEKVGQTAANIEQATRITKWDRRVFQDGIYIVEKAGKPIKF.

It belongs to the universal ribosomal protein uL6 family. In terms of assembly, part of the 50S ribosomal subunit.

Functionally, this protein binds to the 23S rRNA, and is important in its secondary structure. It is located near the subunit interface in the base of the L7/L12 stalk, and near the tRNA binding site of the peptidyltransferase center. In Thermococcus gammatolerans (strain DSM 15229 / JCM 11827 / EJ3), this protein is Large ribosomal subunit protein uL6.